Reading from the N-terminus, the 140-residue chain is Cysteine protease inhibitor 6 (140 aa).

A disulfide bond links Cys-103 and Cys-109.

The protein belongs to the protease inhibitor I3 (leguminous Kunitz-type inhibitor) family.

The protein localises to the vacuole. In terms of biological role, inhibitor of cysteine proteases. May protect the plant by inhibiting proteases of invading organisms. The chain is Cysteine protease inhibitor 6 from Solanum tuberosum (Potato).